A 237-amino-acid polypeptide reads, in one-letter code: Octanoyltransferase (237 aa).

Residues 27 to 210 (SGGDDILLLL…EFYHIFQPAG (184 aa)) enclose the BPL/LPL catalytic domain. Residues 72–79 (RGGNVTCH), 139–141 (SLG), and 152–154 (GMA) each bind substrate. Cysteine 170 functions as the Acyl-thioester intermediate in the catalytic mechanism.

The protein belongs to the LipB family.

It is found in the cytoplasm. The catalysed reaction is octanoyl-[ACP] + L-lysyl-[protein] = N(6)-octanoyl-L-lysyl-[protein] + holo-[ACP] + H(+). It functions in the pathway protein modification; protein lipoylation via endogenous pathway; protein N(6)-(lipoyl)lysine from octanoyl-[acyl-carrier-protein]: step 1/2. Its function is as follows. Catalyzes the transfer of endogenously produced octanoic acid from octanoyl-acyl-carrier-protein onto the lipoyl domains of lipoate-dependent enzymes. Lipoyl-ACP can also act as a substrate although octanoyl-ACP is likely to be the physiological substrate. This is Octanoyltransferase from Desulfovibrio desulfuricans (strain ATCC 27774 / DSM 6949 / MB).